A 362-amino-acid chain; its full sequence is EARP-interacting protein 1 (362 aa).

4 WD repeats span residues 61-108, 206-246, 250-290, and 319-359; these read HPAG…RTLE, AHIH…SALT, PHAH…SEQQ, and EHED…KYAL.

It belongs to the WD repeat EIPR1 family. In terms of tissue distribution, expressed in the hypodermis and the pharynx.

It localises to the cytoplasm. Its function is as follows. Plays a role in the trafficking of cargo to dense-core vesicles, probably through association with the endosome-associated recycling protein (EARP) complex. Important for neuronal function. The protein is EARP-interacting protein 1 of Caenorhabditis elegans.